The sequence spans 313 residues: Olfactory receptor 6E1 (313 aa).

N-linked (GlcNAc...) asparagine glycosylation occurs at asparagine 3. A run of 7 helical transmembrane segments spans residues 25–45, 64–84, 96–116, 142–162, 192–212, 238–258, and 271–291; these read IFLGFLLTYFLILLGNFLIIF, FAMLEIWFTSVIFPKMLTNII, FLQAFLYFFLGTTEFFLLAVM, LVFCSWMSGLLLIIVPSSIVF, LVEFLGFVIANFSLLGTLAVT, TCSSHIIVVSLFYGSCIFMYV, and KVVALLNTVVTPTLNPFIYTL. A disulfide bridge links cysteine 95 with cysteine 177.

It belongs to the G-protein coupled receptor 1 family.

It is found in the cell membrane. Its function is as follows. Odorant receptor. Activated by (-)-citronellal and to a lesser extent by (+)-citronellal. Not activated by carvone or limonene. The sequence is that of Olfactory receptor 6E1 from Mus musculus (Mouse).